The primary structure comprises 236 residues: Phosphoribosylformylglycinamidine synthase subunit PurQ (236 aa).

The region spanning 2-234 is the Glutamine amidotransferase type-1 domain; sequence RFAVVTFPGS…LSVGLEVAHS (233 aa). Residue cysteine 86 is the Nucleophile of the active site. Residues histidine 203 and glutamate 205 contribute to the active site.

As to quaternary structure, part of the FGAM synthase complex composed of 1 PurL, 1 PurQ and 2 PurS subunits.

The protein localises to the cytoplasm. It carries out the reaction N(2)-formyl-N(1)-(5-phospho-beta-D-ribosyl)glycinamide + L-glutamine + ATP + H2O = 2-formamido-N(1)-(5-O-phospho-beta-D-ribosyl)acetamidine + L-glutamate + ADP + phosphate + H(+). The enzyme catalyses L-glutamine + H2O = L-glutamate + NH4(+). It participates in purine metabolism; IMP biosynthesis via de novo pathway; 5-amino-1-(5-phospho-D-ribosyl)imidazole from N(2)-formyl-N(1)-(5-phospho-D-ribosyl)glycinamide: step 1/2. In terms of biological role, part of the phosphoribosylformylglycinamidine synthase complex involved in the purines biosynthetic pathway. Catalyzes the ATP-dependent conversion of formylglycinamide ribonucleotide (FGAR) and glutamine to yield formylglycinamidine ribonucleotide (FGAM) and glutamate. The FGAM synthase complex is composed of three subunits. PurQ produces an ammonia molecule by converting glutamine to glutamate. PurL transfers the ammonia molecule to FGAR to form FGAM in an ATP-dependent manner. PurS interacts with PurQ and PurL and is thought to assist in the transfer of the ammonia molecule from PurQ to PurL. This is Phosphoribosylformylglycinamidine synthase subunit PurQ from Thermomicrobium roseum (strain ATCC 27502 / DSM 5159 / P-2).